Reading from the N-terminus, the 506-residue chain is ATP synthase subunit alpha, plastid (506 aa).

Residue 170-177 (GDRQTGKT) coordinates ATP.

Belongs to the ATPase alpha/beta chains family. F-type ATPases have 2 components, CF(1) - the catalytic core - and CF(0) - the membrane proton channel. CF(1) has five subunits: alpha(3), beta(3), gamma(1), delta(1), epsilon(1). CF(0) has four main subunits: a, b, b' and c.

It localises to the plastid membrane. It carries out the reaction ATP + H2O + 4 H(+)(in) = ADP + phosphate + 5 H(+)(out). Functionally, produces ATP from ADP in the presence of a proton gradient across the membrane. The alpha chain is a regulatory subunit. The protein is ATP synthase subunit alpha, plastid of Prototheca wickerhamii.